The sequence spans 206 residues: Octanoyltransferase (206 aa).

The BPL/LPL catalytic domain occupies 30-206 (PETNDEIWLV…EFVTLLNNSI (177 aa)). Substrate contacts are provided by residues 69–76 (RGGQVTYH), 137–139 (SLG), and 150–152 (GIA). C168 functions as the Acyl-thioester intermediate in the catalytic mechanism.

This sequence belongs to the LipB family.

It is found in the cytoplasm. It catalyses the reaction octanoyl-[ACP] + L-lysyl-[protein] = N(6)-octanoyl-L-lysyl-[protein] + holo-[ACP] + H(+). It functions in the pathway protein modification; protein lipoylation via endogenous pathway; protein N(6)-(lipoyl)lysine from octanoyl-[acyl-carrier-protein]: step 1/2. In terms of biological role, catalyzes the transfer of endogenously produced octanoic acid from octanoyl-acyl-carrier-protein onto the lipoyl domains of lipoate-dependent enzymes. Lipoyl-ACP can also act as a substrate although octanoyl-ACP is likely to be the physiological substrate. The polypeptide is Octanoyltransferase (Francisella tularensis subsp. holarctica (strain FTNF002-00 / FTA)).